We begin with the raw amino-acid sequence, 491 residues long: Glycogen synthase (491 aa).

Lys-15 is a binding site for ADP-alpha-D-glucose.

It belongs to the glycosyltransferase 1 family. Bacterial/plant glycogen synthase subfamily.

It carries out the reaction [(1-&gt;4)-alpha-D-glucosyl](n) + ADP-alpha-D-glucose = [(1-&gt;4)-alpha-D-glucosyl](n+1) + ADP + H(+). Its pathway is glycan biosynthesis; glycogen biosynthesis. Synthesizes alpha-1,4-glucan chains using ADP-glucose. The sequence is that of Glycogen synthase from Treponema denticola (strain ATCC 35405 / DSM 14222 / CIP 103919 / JCM 8153 / KCTC 15104).